A 143-amino-acid chain; its full sequence is Hemoglobin subunit alpha (143 aa).

The Globin domain occupies 2–143 (TLSDKDKSTV…VALALAERYR (142 aa)). Position 60 (His-60) interacts with O2. His-89 contacts heme b.

This sequence belongs to the globin family. In terms of assembly, heterotetramer of two alpha chains and two beta chains. In terms of tissue distribution, red blood cells.

In terms of biological role, involved in oxygen transport from gills to the various peripheral tissues. In Thunnus thynnus (Atlantic bluefin tuna), this protein is Hemoglobin subunit alpha (hba).